The sequence spans 445 residues: N-succinylarginine dihydrolase (445 aa).

Substrate is bound by residues 19-28 (AGLSYGNVAS), Asn110, and 137-138 (HR). Glu174 is an active-site residue. Arg214 contacts substrate. His250 is a catalytic residue. Residues Asp252 and Asn363 each contribute to the substrate site. Cys369 (nucleophile) is an active-site residue.

This sequence belongs to the succinylarginine dihydrolase family. In terms of assembly, homodimer.

It catalyses the reaction N(2)-succinyl-L-arginine + 2 H2O + 2 H(+) = N(2)-succinyl-L-ornithine + 2 NH4(+) + CO2. The protein operates within amino-acid degradation; L-arginine degradation via AST pathway; L-glutamate and succinate from L-arginine: step 2/5. In terms of biological role, catalyzes the hydrolysis of N(2)-succinylarginine into N(2)-succinylornithine, ammonia and CO(2). This is N-succinylarginine dihydrolase from Shewanella loihica (strain ATCC BAA-1088 / PV-4).